The following is a 381-amino-acid chain: Cytochrome b (381 aa).

4 consecutive transmembrane segments (helical) span residues phenylalanine 36–methionine 56, tryptophan 80–isoleucine 101, tryptophan 116–leucine 136, and phenylalanine 181–leucine 201. Histidine 86 and histidine 100 together coordinate heme b. Heme b contacts are provided by histidine 185 and histidine 199. Residue histidine 204 coordinates a ubiquinone. 4 helical membrane passes run phenylalanine 229–asparagine 249, leucine 291–phenylalanine 311, methionine 323–alanine 343, and tyrosine 350–methionine 370.

It belongs to the cytochrome b family. In terms of assembly, the main subunits of complex b-c1 are: cytochrome b, cytochrome c1 and the Rieske protein. It depends on heme b as a cofactor.

It localises to the mitochondrion inner membrane. Functionally, component of the ubiquinol-cytochrome c reductase complex (complex III or cytochrome b-c1 complex) that is part of the mitochondrial respiratory chain. The b-c1 complex mediates electron transfer from ubiquinol to cytochrome c. Contributes to the generation of a proton gradient across the mitochondrial membrane that is then used for ATP synthesis. The protein is Cytochrome b (MT-CYB) of Ostrinia nubilalis (European corn borer).